The chain runs to 336 residues: Glycerol-3-phosphate dehydrogenase [NAD(P)+] (336 aa).

Residues tryptophan 11, arginine 33, and lysine 105 each contribute to the NADPH site. Sn-glycerol 3-phosphate is bound by residues lysine 105, glycine 141, and serine 143. Residue alanine 145 coordinates NADPH. Positions 196, 249, 259, 260, and 261 each coordinate sn-glycerol 3-phosphate. Lysine 196 functions as the Proton acceptor in the catalytic mechanism. Arginine 260 contacts NADPH. Residues valine 284 and glutamate 286 each contribute to the NADPH site.

The protein belongs to the NAD-dependent glycerol-3-phosphate dehydrogenase family.

It localises to the cytoplasm. It catalyses the reaction sn-glycerol 3-phosphate + NAD(+) = dihydroxyacetone phosphate + NADH + H(+). The enzyme catalyses sn-glycerol 3-phosphate + NADP(+) = dihydroxyacetone phosphate + NADPH + H(+). It participates in membrane lipid metabolism; glycerophospholipid metabolism. In terms of biological role, catalyzes the reduction of the glycolytic intermediate dihydroxyacetone phosphate (DHAP) to sn-glycerol 3-phosphate (G3P), the key precursor for phospholipid synthesis. This chain is Glycerol-3-phosphate dehydrogenase [NAD(P)+], found in Delftia acidovorans (strain DSM 14801 / SPH-1).